We begin with the raw amino-acid sequence, 489 residues long: Netrin-5 (489 aa).

Positions 1 to 16 (MPVTFALLLLLGQATA) are cleaved as a signal peptide. An N-linked (GlcNAc...) asparagine glycan is attached at asparagine 62. Intrachain disulfides connect cysteine 157-cysteine 166, cysteine 159-cysteine 175, cysteine 177-cysteine 186, cysteine 189-cysteine 209, cysteine 212-cysteine 221, cysteine 214-cysteine 239, cysteine 242-cysteine 251, cysteine 254-cysteine 272, cysteine 275-cysteine 287, cysteine 277-cysteine 294, cysteine 296-cysteine 305, cysteine 308-cysteine 322, cysteine 345-cysteine 418, cysteine 349-cysteine 420, and cysteine 364-cysteine 475. 3 Laminin EGF-like domains span residues 157–211 (CQCH…PCLP), 212–274 (CSCN…ACRA), and 275–324 (CQCH…PCQR). Positions 345-475 (CQNYCNMSDT…LQQEERAGGC (131 aa)) constitute an NTR domain. The interval 470 to 489 (ERAGGCRGVRAPTPSPRPEH) is disordered.

It is found in the secreted. Functionally, plays a role in neurogenesis. Prevents motor neuron cell body migration out of the neural tube. This chain is Netrin-5 (NTN5), found in Homo sapiens (Human).